Reading from the N-terminus, the 865-residue chain is Fatty acyl-CoA synthetase and RNA processing-associated kinase 1 (865 aa).

The Protein kinase domain maps to 41–313; sequence YILGSTLGEG…LKQIKKHEWL (273 aa). Residues 47–55 and lysine 80 contribute to the ATP site; that span reads LGEGEFGKV. Catalysis depends on aspartate 175, which acts as the Proton acceptor. The disordered stretch occupies residues 341 to 398; the sequence is KPRRRYGSRPQSSCSTSSLGSRSDKRDSLVIDSTLITFPAPPQESQNHIITRPASIAS. Residues 352-361 show a composition bias toward low complexity; it reads SSCSTSSLGS. Serine 441 carries the phosphoserine modification. Disordered stretches follow at residues 480-554, 673-733, and 754-782; these read ISGS…YTTP, TEES…LNEA, and SLYSSMDSKRKPSPPSQRRPKKDDSYQTN. The segment covering 494–538 has biased composition (polar residues); that stretch reads STTMQTSKIQPNNMASSQNHQYNKNKTQNSLQSAKNFYRTSSSSH. Composition is skewed to basic and acidic residues over residues 690 to 708 and 724 to 733; these read EGQESIDKAKTEDTSEKGS and NHLERSLNEA.

It belongs to the protein kinase superfamily. Ser/Thr protein kinase family. As to quaternary structure, interacts with FAA3, POL5 and TPA1.

It localises to the cytoplasm. It catalyses the reaction L-seryl-[protein] + ATP = O-phospho-L-seryl-[protein] + ADP + H(+). The enzyme catalyses L-threonyl-[protein] + ATP = O-phospho-L-threonyl-[protein] + ADP + H(+). Its function is as follows. Putative serine/threonine-protein kinase that may be involved in rRNA transcription and ribosome biogenesis. This chain is Fatty acyl-CoA synthetase and RNA processing-associated kinase 1 (FRK1), found in Saccharomyces cerevisiae (strain ATCC 204508 / S288c) (Baker's yeast).